The primary structure comprises 724 residues: 4-alpha-glucanotransferase (724 aa).

Belongs to the disproportionating enzyme family.

It is found in the cytoplasm. It carries out the reaction Transfers a segment of a (1-&gt;4)-alpha-D-glucan to a new position in an acceptor, which may be glucose or a (1-&gt;4)-alpha-D-glucan.. This Mycobacterium bovis (strain ATCC BAA-935 / AF2122/97) protein is 4-alpha-glucanotransferase (malQ).